Reading from the N-terminus, the 442-residue chain is Ribulose bisphosphate carboxylase/oxygenase activase 1, chloroplastic (442 aa).

Residues 1-58 constitute a chloroplast transit peptide; sequence MATSVSTIGAVNKTPLSLNNSVAGTSVPSTAFFGKTLKKVYGKGVSSPKVTNKSLRIV. Residue 169 to 176 participates in ATP binding; the sequence is GGKGQGKS.

The protein belongs to the RuBisCO activase family.

The protein resides in the plastid. Its subcellular location is the chloroplast stroma. In terms of biological role, activation of RuBisCO (ribulose-1,5-bisphosphate carboxylase/oxygenase; EC 4.1.1.39) involves the ATP-dependent carboxylation of the epsilon-amino group of lysine leading to a carbamate structure. In Nicotiana tabacum (Common tobacco), this protein is Ribulose bisphosphate carboxylase/oxygenase activase 1, chloroplastic.